We begin with the raw amino-acid sequence, 95 residues long: Opiscorpine-1 (95 aa).

An N-terminal signal peptide occupies residues M1 to C19. The BetaSPN-type CS-alpha/beta domain maps to E55–Y95. 3 disulfide bridges follow: C58–C82, C68–C87, and C72–C89.

The protein belongs to the long chain scorpion toxin family. Class 3 subfamily. Expressed by the venom gland.

Its subcellular location is the secreted. Its function is as follows. The short synthetic peptide (20-54) has antimicrobial activity against the yeasts F.culmorum (IC(50)=8.8 uM) and F.oxysporum (IC(50)=10 uM), and the Gram-negative bacteria E.coli. This Opistophthalmus carinatus (African yellow leg scorpion) protein is Opiscorpine-1.